The primary structure comprises 352 residues: C-C chemokine receptor type 5 (352 aa).

The Extracellular segment spans residues 1–30 (MDYQVSSPTYDIDYYTSEPCQKVNVKQIAA). Tyrosine 3 bears the Sulfotyrosine mark. 2 O-linked (GalNAc...) serine glycosylation sites follow: serine 6 and serine 7. Residues tyrosine 10, tyrosine 14, and tyrosine 15 each carry the sulfotyrosine modification. 2 disulfide bridges follow: cysteine 20–cysteine 269 and cysteine 101–cysteine 178. A helical membrane pass occupies residues 31 to 58 (RLLPPLYSLVFIFGFVGNILVVLILINC). The Cytoplasmic portion of the chain corresponds to 59–68 (KRLKSMTDIY). Residues 69–89 (LLNLAISDLFFLLTVPFWAHY) traverse the membrane as a helical segment. The Extracellular segment spans residues 90–102 (AAAQWDFGNTMCQ). Residues 103-124 (LLTGLYFIGFFSGIFFIILLTI) form a helical membrane-spanning segment. Residues 125 to 141 (DRYLAIVHAVFALKART) lie on the Cytoplasmic side of the membrane. The helical transmembrane segment at 142–166 (VTFGVVTSVITWVVAVFASLPGIIF) threads the bilayer. Residues 167 to 198 (TRSQREGLHYTCSSHFPYSQYQFWKNFQTLKI) lie on the Extracellular side of the membrane. A helical membrane pass occupies residues 199 to 218 (VILGLVLPLLIMVICYSGIL). Topologically, residues 219-235 (KTLLRCRNEKKRHRAVR) are cytoplasmic. A helical membrane pass occupies residues 236–260 (LIFTIMIVYFLFWAPYNIVLLLNTF). The Extracellular portion of the chain corresponds to 261–277 (QEFFGLNNCSSSNRLDQ). A helical transmembrane segment spans residues 278–301 (AMQVTETLGMTHCCINPIIYAFVG). The Cytoplasmic segment spans residues 302 to 352 (EKFRNYLLVFFQKHIAKRFCKCCSIFQQEAPERASSVYTRSTGEHEISVGL). Residues cysteine 321, cysteine 323, and cysteine 324 are each lipidated (S-palmitoyl cysteine). 4 positions are modified to phosphoserine; by BARK1: serine 336, serine 337, serine 342, and serine 349.

Belongs to the G-protein coupled receptor 1 family. Interacts with PRAF2. Efficient ligand binding to CCL3/MIP-1alpha and CCL4/MIP-1beta requires sulfation, O-glycosylation and sialic acid modifications. Glycosylation on Ser-6 is required for efficient binding of CCL4. Interacts with GRK2. Interacts with ARRB1 and ARRB2. Interacts with CNIH4. Interacts with S100A4; this interaction stimulates T-lymphocyte chemotaxis. In terms of processing, sulfated on at least 2 of the N-terminal tyrosines. Sulfation is required for efficient binding of the chemokines, CCL3 and CCL4. Palmitoylation in the C-terminal is important for cell surface expression. Post-translationally, phosphorylation on serine residues in the C-terminal is stimulated by binding CC chemokines especially by APO-RANTES. In terms of processing, O-glycosylated, but not N-glycosylated. Ser-6 appears to be the major site even if Ser-7 may be also O-glycosylated. Also sialylated glycans present which contribute to chemokine binding. Thr-16 and Ser-17 may also be glycosylated and, if so, with small moieties such as a T-antigen.

It is found in the cell membrane. Functionally, receptor for a number of inflammatory CC-chemokines including CCL3/MIP-1-alpha, CCL4/MIP-1-beta and RANTES and subsequently transduces a signal by increasing the intracellular calcium ion level. May play a role in the control of granulocytic lineage proliferation or differentiation. Participates in T-lymphocyte migration to the infection site by acting as a chemotactic receptor. The polypeptide is C-C chemokine receptor type 5 (CCR5) (Pygathrix nemaeus (Red-shanked douc langur)).